The primary structure comprises 153 residues: Peptidyl-prolyl cis-trans isomerase FKBP15-1 (153 aa).

The N-terminal stretch at 1–25 (MMSSASAMKAVGFLLLLTILTLAYA) is a signal peptide. Residues 52–140 (GDKIKVHYRG…IFDTELVAVN (89 aa)) form the PPIase FKBP-type domain. Positions 150-153 (KNEL) match the Prevents secretion from ER motif.

This sequence belongs to the FKBP-type PPIase family.

The protein localises to the endoplasmic reticulum lumen. It carries out the reaction [protein]-peptidylproline (omega=180) = [protein]-peptidylproline (omega=0). Functionally, PPIases accelerate the folding of proteins. It catalyzes the cis-trans isomerization of proline imidic peptide bonds in oligopeptides. The protein is Peptidyl-prolyl cis-trans isomerase FKBP15-1 (FKBP15-1) of Arabidopsis thaliana (Mouse-ear cress).